We begin with the raw amino-acid sequence, 147 residues long: Mineralocorticoid receptor (147 aa).

Positions 1–147 constitute an NR LBD domain; that stretch reads FALSWRSYKH…SQALKVEFPA (147 aa). The 21-hydroxyprogesterone site is built by R6 and T134. Aldosterone contacts are provided by R6 and T134. Residues R6 and T134 each coordinate progesterone.

Belongs to the nuclear hormone receptor family. NR3 subfamily.

The protein resides in the cytoplasm. It localises to the nucleus. Receptor for both mineralocorticoids (MC) such as aldosterone and glucocorticoids (GC) such as corticosterone or cortisol. Binds to mineralocorticoid response elements (MRE) and transactivates target genes. The effect of MC is to increase ion and water transport and thus raise extracellular fluid volume and blood pressure and lower potassium levels. This is Mineralocorticoid receptor (NR3C2) from Gallus gallus (Chicken).